The following is a 347-amino-acid chain: Dual specificity mitogen-activated protein kinase kinase 3 (347 aa).

The residue at position 1 (Met1) is an N-acetylmethionine. Over residues 1–11 the composition is skewed to pro residues; that stretch reads MESPAASPPAS. A disordered region spans residues 1–45; it reads MESPAASPPASLPQTKGKSKRKKDLRISCVSKPPVSNPTPPRNLD. At Ser3 the chain carries Phosphoserine. In terms of domain architecture, Protein kinase spans 64-325; that stretch reads LVTISELGRG…YLELMEHPFF (262 aa). Residues 70–78 and Lys93 each bind ATP; that span reads LGRGAYGVV. Residue Asp190 is the Proton acceptor of the active site. Phosphoserine is present on Ser218. Thr222 bears the Phosphothreonine mark.

This sequence belongs to the protein kinase superfamily. STE Ser/Thr protein kinase family. MAP kinase kinase subfamily. Component of a signaling complex containing at least AKAP13, PKN1, MAPK14, ZAK and MAP2K3. Within this complex, AKAP13 interacts directly with PKN1, which in turn recruits MAPK14, MAP2K3 and ZAK. Binds to DYRK1B/MIRK and increases its kinase activity. Part of a complex with MAP3K3, RAC1 and CCM2. Interacts with ARRB1. Post-translationally, autophosphorylated. Phosphorylation on Ser-218 and Thr-222 by MAP kinase kinase kinases positively regulates the kinase activity. Phosphorylated by TAOK2.

It carries out the reaction L-seryl-[protein] + ATP = O-phospho-L-seryl-[protein] + ADP + H(+). It catalyses the reaction L-threonyl-[protein] + ATP = O-phospho-L-threonyl-[protein] + ADP + H(+). The enzyme catalyses L-tyrosyl-[protein] + ATP = O-phospho-L-tyrosyl-[protein] + ADP + H(+). With respect to regulation, activated by dual phosphorylation on Ser-218 and Thr-222. In terms of biological role, dual specificity kinase. Is activated by cytokines and environmental stress in vivo. Catalyzes the concomitant phosphorylation of a threonine and a tyrosine residue in the MAP kinase p38. Part of a signaling cascade that begins with the activation of the adrenergic receptor ADRA1B and leads to the activation of MAPK14. This chain is Dual specificity mitogen-activated protein kinase kinase 3 (Map2k3), found in Mus musculus (Mouse).